Here is a 223-residue protein sequence, read N- to C-terminus: GTP-binding nuclear protein Ran (223 aa).

In terms of domain architecture, Small GTPase Ran-type spans 8-172 (VVAEFKLVLV…LWILRKLTGD (165 aa)). 19 to 26 (DGGVGKTT) contacts GTP. The interval 38-46 (KRYIATQGV) is switch-I. Residues glycine 69, 123 to 126 (NKVD), and 151 to 153 (SAK) each bind GTP. Residues 69–85 (GQEKLGGLREGYYIGAD) are switch-II.

It belongs to the small GTPase superfamily. Ran family. In terms of assembly, monomer. Found in a nuclear export complex with RanGTP, exportin and pre-miRNA.

It is found in the nucleus. GTP-binding protein involved in nucleocytoplasmic transport. Required for the import of protein into the nucleus and also for RNA export. Involved in chromatin condensation and control of cell cycle. The chain is GTP-binding nuclear protein Ran from Tetrahymena pyriformis.